A 375-amino-acid chain; its full sequence is Trichodiene synthase (375 aa).

It belongs to the trichodiene synthase family.

The enzyme catalyses (2E,6E)-farnesyl diphosphate = trichodiene + diphosphate. It functions in the pathway sesquiterpene biosynthesis; trichothecene biosynthesis. TS is a member of the terpene cyclase group of enzymes. It catalyzes the isomerization and cyclization of farnesyl pyro-phosphate to form trichodiene, the first cyclic intermediate in the biosynthetic pathway for trichothecenes. It serves to branch trichothecene biosynthesis from the isoprenoid pathway. The chain is Trichodiene synthase (TRI5) from Fusarium austroamericanum.